A 191-amino-acid chain; its full sequence is Molybdenum cofactor guanylyltransferase (191 aa).

GTP is bound by residues L11 to G13, K23, D66, and D97. Residue D97 coordinates Mg(2+).

Belongs to the MobA family. In terms of assembly, monomer. Mg(2+) serves as cofactor.

It is found in the cytoplasm. It catalyses the reaction Mo-molybdopterin + GTP + H(+) = Mo-molybdopterin guanine dinucleotide + diphosphate. Transfers a GMP moiety from GTP to Mo-molybdopterin (Mo-MPT) cofactor (Moco or molybdenum cofactor) to form Mo-molybdopterin guanine dinucleotide (Mo-MGD) cofactor. This Campylobacter jejuni subsp. jejuni serotype O:2 (strain ATCC 700819 / NCTC 11168) protein is Molybdenum cofactor guanylyltransferase.